We begin with the raw amino-acid sequence, 239 residues long: U-scoloptoxin(11)-Sm3a (239 aa).

An N-terminal signal peptide occupies residues 1 to 16 (MINFLLLVLILSVLES).

It belongs to the scoloptoxin-11 family. Contains 9 disulfide bonds. As to expression, expressed by the venom gland.

Its subcellular location is the secreted. This chain is U-scoloptoxin(11)-Sm3a, found in Scolopendra morsitans (Tanzanian blue ringleg centipede).